The chain runs to 454 residues: tRNA-2-methylthio-N(6)-dimethylallyladenosine synthase (454 aa).

Positions 6 to 122 (RRYHITTFGC…LQDLLQEVLA (117 aa)) constitute an MTTase N-terminal domain. Cys-15, Cys-51, Cys-85, Cys-157, Cys-161, and Cys-164 together coordinate [4Fe-4S] cluster. A Radical SAM core domain is found at 143–380 (RESTVTAWVN…NHLVAIKAAE (238 aa)). In terms of domain architecture, TRAM spans 383–447 (QRYLGRIEEV…AFSLTGEPVK (65 aa)).

It belongs to the methylthiotransferase family. MiaB subfamily. Monomer. [4Fe-4S] cluster is required as a cofactor.

The protein localises to the cytoplasm. The enzyme catalyses N(6)-dimethylallyladenosine(37) in tRNA + (sulfur carrier)-SH + AH2 + 2 S-adenosyl-L-methionine = 2-methylsulfanyl-N(6)-dimethylallyladenosine(37) in tRNA + (sulfur carrier)-H + 5'-deoxyadenosine + L-methionine + A + S-adenosyl-L-homocysteine + 2 H(+). Its function is as follows. Catalyzes the methylthiolation of N6-(dimethylallyl)adenosine (i(6)A), leading to the formation of 2-methylthio-N6-(dimethylallyl)adenosine (ms(2)i(6)A) at position 37 in tRNAs that read codons beginning with uridine. This is tRNA-2-methylthio-N(6)-dimethylallyladenosine synthase from Gloeothece citriformis (strain PCC 7424) (Cyanothece sp. (strain PCC 7424)).